The following is a 479-amino-acid chain: ATP-dependent RNA helicase DbpA (479 aa).

Positions 2-30 (SHFKNYQISHDILRALEGLGYTEPTKVQQ) match the Q motif motif. The Helicase ATP-binding domain maps to 33–203 (IPAALERKDL…RQYMQNPEHI (171 aa)). Position 46–53 (46–53 (SQTGSGKT)) interacts with ATP. The DEAD box motif lies at 151 to 154 (DEAD). One can recognise a Helicase C-terminal domain in the interval 214-374 (NIEHAVIQVR…KIEAPSQEEV (161 aa)). Positions 404 to 479 (MKLYFNGGKK…KQLKVNKANK (76 aa)) are involved in 23S rRNA binding.

This sequence belongs to the DEAD box helicase family. DbpA subfamily. As to quaternary structure, may interact with RNA helicases CshA and CshB.

It is found in the cytoplasm. The catalysed reaction is ATP + H2O = ADP + phosphate + H(+). With respect to regulation, ATPase activity is stimulated by interaction with RNA. In terms of biological role, DEAD-box RNA helicase involved in the assembly of the 50S ribosomal subunit. Has an RNA-dependent ATPase activity, which is specific for 23S rRNA, and a 3' to 5' RNA helicase activity that uses the energy of ATP hydrolysis to destabilize and unwind short rRNA duplexes. The sequence is that of ATP-dependent RNA helicase DbpA from Bacillus subtilis (strain 168).